Reading from the N-terminus, the 251-residue chain is 2,3-bisphosphoglycerate-dependent phosphoglycerate mutase 2 (251 aa).

Substrate is bound by residues 8–15 (RHGESTWN), 21–22 (TG), R60, 87–90 (ERHY), K98, 114–115 (RR), and 183–184 (GN). H9 (tele-phosphohistidine intermediate) is an active-site residue. The active-site Proton donor/acceptor is the E87.

The protein belongs to the phosphoglycerate mutase family. BPG-dependent PGAM subfamily. In terms of assembly, homodimer.

The catalysed reaction is (2R)-2-phosphoglycerate = (2R)-3-phosphoglycerate. The protein operates within carbohydrate degradation; glycolysis; pyruvate from D-glyceraldehyde 3-phosphate: step 3/5. Functionally, catalyzes the interconversion of 2-phosphoglycerate and 3-phosphoglycerate. The chain is 2,3-bisphosphoglycerate-dependent phosphoglycerate mutase 2 from Nitrosospira multiformis (strain ATCC 25196 / NCIMB 11849 / C 71).